Consider the following 864-residue polypeptide: Protein translocase subunit SecA (864 aa).

ATP-binding positions include Gln87, 105–109 (GEGKT), and Asp512.

It belongs to the SecA family. As to quaternary structure, monomer and homodimer. Part of the essential Sec protein translocation apparatus which comprises SecA, SecYEG and auxiliary proteins SecDF-YajC and YidC.

The protein resides in the cell inner membrane. It is found in the cytoplasm. It carries out the reaction ATP + H2O + cellular proteinSide 1 = ADP + phosphate + cellular proteinSide 2.. In terms of biological role, part of the Sec protein translocase complex. Interacts with the SecYEG preprotein conducting channel. Has a central role in coupling the hydrolysis of ATP to the transfer of proteins into and across the cell membrane, serving as an ATP-driven molecular motor driving the stepwise translocation of polypeptide chains across the membrane. In Buchnera aphidicola subsp. Cinara cedri (strain Cc), this protein is Protein translocase subunit SecA.